The sequence spans 316 residues: Methionyl-tRNA formyltransferase (316 aa).

110–113 (SLLP) contacts (6S)-5,6,7,8-tetrahydrofolate.

It belongs to the Fmt family.

The enzyme catalyses L-methionyl-tRNA(fMet) + (6R)-10-formyltetrahydrofolate = N-formyl-L-methionyl-tRNA(fMet) + (6S)-5,6,7,8-tetrahydrofolate + H(+). In terms of biological role, attaches a formyl group to the free amino group of methionyl-tRNA(fMet). The formyl group appears to play a dual role in the initiator identity of N-formylmethionyl-tRNA by promoting its recognition by IF2 and preventing the misappropriation of this tRNA by the elongation apparatus. This Bacillus licheniformis (strain ATCC 14580 / DSM 13 / JCM 2505 / CCUG 7422 / NBRC 12200 / NCIMB 9375 / NCTC 10341 / NRRL NRS-1264 / Gibson 46) protein is Methionyl-tRNA formyltransferase.